The primary structure comprises 244 residues: Probable phosphatase NT01CX_1282 (244 aa).

Zn(2+)-binding residues include His-8, His-10, His-16, His-41, Glu-74, His-102, His-132, Asp-193, and His-195.

Belongs to the PHP family. It depends on Zn(2+) as a cofactor.

The chain is Probable phosphatase NT01CX_1282 from Clostridium novyi (strain NT).